The chain runs to 86 residues: Large ribosomal subunit protein bL27 (86 aa).

Gly residues predominate over residues 1 to 10 (MAQKKGGGST). A disordered region spans residues 1–21 (MAQKKGGGSTRNGRDSESKRL).

It belongs to the bacterial ribosomal protein bL27 family.

This Cupriavidus necator (strain ATCC 17699 / DSM 428 / KCTC 22496 / NCIMB 10442 / H16 / Stanier 337) (Ralstonia eutropha) protein is Large ribosomal subunit protein bL27.